Reading from the N-terminus, the 149-residue chain is Deoxyuridine 5'-triphosphate nucleotidohydrolase (149 aa).

Substrate contacts are provided by residues 68–70 (RSG), N81, 85–87 (LID), and M95.

The protein belongs to the dUTPase family. Mg(2+) is required as a cofactor.

It catalyses the reaction dUTP + H2O = dUMP + diphosphate + H(+). It functions in the pathway pyrimidine metabolism; dUMP biosynthesis; dUMP from dCTP (dUTP route): step 2/2. In terms of biological role, this enzyme is involved in nucleotide metabolism: it produces dUMP, the immediate precursor of thymidine nucleotides and it decreases the intracellular concentration of dUTP so that uracil cannot be incorporated into DNA. This chain is Deoxyuridine 5'-triphosphate nucleotidohydrolase, found in Albidiferax ferrireducens (strain ATCC BAA-621 / DSM 15236 / T118) (Rhodoferax ferrireducens).